The chain runs to 181 residues: Peptidyl-tRNA hydrolase (181 aa).

A tRNA-binding site is contributed by tyrosine 14. Residue histidine 19 is the Proton acceptor of the active site. Residues phenylalanine 60, asparagine 62, and asparagine 106 each coordinate tRNA.

Belongs to the PTH family. Monomer.

It is found in the cytoplasm. It catalyses the reaction an N-acyl-L-alpha-aminoacyl-tRNA + H2O = an N-acyl-L-amino acid + a tRNA + H(+). Hydrolyzes ribosome-free peptidyl-tRNAs (with 1 or more amino acids incorporated), which drop off the ribosome during protein synthesis, or as a result of ribosome stalling. In terms of biological role, catalyzes the release of premature peptidyl moieties from peptidyl-tRNA molecules trapped in stalled 50S ribosomal subunits, and thus maintains levels of free tRNAs and 50S ribosomes. The sequence is that of Peptidyl-tRNA hydrolase from Campylobacter curvus (strain 525.92).